A 115-amino-acid chain; its full sequence is Ig heavy chain V-III region W3082 (115 aa).

Positions Glu-1–Ser-114 constitute an Ig-like domain. Cys-22 and Cys-98 are oxidised to a cystine.

The sequence is that of Ig heavy chain V-III region W3082 from Mus musculus (Mouse).